The following is a 172-amino-acid chain: Inorganic pyrophosphatase (172 aa).

Substrate-binding residues include K28, R42, and Y54. D64, D69, and D101 together coordinate Mg(2+). Position 140 (Y140) interacts with substrate.

The protein belongs to the PPase family. As to quaternary structure, homohexamer. Requires Mg(2+) as cofactor.

It localises to the cytoplasm. It carries out the reaction diphosphate + H2O = 2 phosphate + H(+). Catalyzes the hydrolysis of inorganic pyrophosphate (PPi) forming two phosphate ions. This Campylobacter jejuni subsp. jejuni serotype O:2 (strain ATCC 700819 / NCTC 11168) protein is Inorganic pyrophosphatase.